The chain runs to 464 residues: Cysteine--tRNA ligase (464 aa).

Residue C32 coordinates Zn(2+). Residues 34 to 44 (VTVYDDCHIGH) carry the 'HIGH' region motif. Zn(2+) is bound by residues C213, H238, and E242. Residues 270-274 (KMSKS) carry the 'KMSKS' region motif. K273 is an ATP binding site.

It belongs to the class-I aminoacyl-tRNA synthetase family. Monomer. The cofactor is Zn(2+).

It is found in the cytoplasm. The enzyme catalyses tRNA(Cys) + L-cysteine + ATP = L-cysteinyl-tRNA(Cys) + AMP + diphosphate. This Francisella tularensis subsp. tularensis (strain SCHU S4 / Schu 4) protein is Cysteine--tRNA ligase.